Here is a 621-residue protein sequence, read N- to C-terminus: 1-deoxy-D-xylulose-5-phosphate synthase (621 aa).

Residues His80 and 121-123 (GHS) contribute to the thiamine diphosphate site. Asp152 contacts Mg(2+). Residues 153-154 (GA), Asn181, Tyr288, and Glu370 contribute to the thiamine diphosphate site. Asn181 serves as a coordination point for Mg(2+).

Belongs to the transketolase family. DXPS subfamily. Homodimer. Mg(2+) is required as a cofactor. Requires thiamine diphosphate as cofactor.

It carries out the reaction D-glyceraldehyde 3-phosphate + pyruvate + H(+) = 1-deoxy-D-xylulose 5-phosphate + CO2. It participates in metabolic intermediate biosynthesis; 1-deoxy-D-xylulose 5-phosphate biosynthesis; 1-deoxy-D-xylulose 5-phosphate from D-glyceraldehyde 3-phosphate and pyruvate: step 1/1. Functionally, catalyzes the acyloin condensation reaction between C atoms 2 and 3 of pyruvate and glyceraldehyde 3-phosphate to yield 1-deoxy-D-xylulose-5-phosphate (DXP). This Shewanella sediminis (strain HAW-EB3) protein is 1-deoxy-D-xylulose-5-phosphate synthase.